The primary structure comprises 141 residues: Large ribosomal subunit protein uL11 (141 aa).

Belongs to the universal ribosomal protein uL11 family. Part of the ribosomal stalk of the 50S ribosomal subunit. Interacts with L10 and the large rRNA to form the base of the stalk. L10 forms an elongated spine to which L12 dimers bind in a sequential fashion forming a multimeric L10(L12)X complex. One or more lysine residues are methylated.

Its function is as follows. Forms part of the ribosomal stalk which helps the ribosome interact with GTP-bound translation factors. The chain is Large ribosomal subunit protein uL11 from Nostoc sp. (strain PCC 7120 / SAG 25.82 / UTEX 2576).